A 567-amino-acid chain; its full sequence is MKQSKVFIPTMRDVPSEAEAQSHRLLLKAGLIKQSTSGIYSYLPLATRVLNNITAIVRQEMERIDSVEILMPALQQAELWEESGRWGAYGPELMRLQDRHGRQFALGPTHEELVTSIVRNELKSYKQLPMTLFQIQSKFRDEKRPRFGLLRGREFIMKDAYSFHADEASLDQTYQDMYQAYSRIFERVGINARPVVADSGAIGGSHTHEFMALSAIGEDTIVYSKESDYAANIEKAEVVYEPNHKHTTVQPIEKIETPNVKTAQELADFLGRPVDEIVKTMIFKVDGEYIMVLVRGHHEINDIKLKSYFGTDNIELATQDEIVNLVGANPGSLGPVIDKEIKIYADNFVQDLNNLVVGANEDGYHLINVNVGRDFNVDEYGDFRFILEGEKLSDGSGVAHFAEGIEVGQVFKLGTKYSESMNATFLDNQGKAQPLIMGCYGIGISRTLSAIVEQNHDDNGIVWPKSVTPFDLHLISINPKKDDQRELADALYAEFNTKFDVLYDDRQERAGVKFNDADLIGLPLRIVVGKRASEGIVEVKERLTGDSEEVHIDDLMTVITNKYDNLK.

It belongs to the class-II aminoacyl-tRNA synthetase family. ProS type 1 subfamily. In terms of assembly, homodimer.

It localises to the cytoplasm. The enzyme catalyses tRNA(Pro) + L-proline + ATP = L-prolyl-tRNA(Pro) + AMP + diphosphate. Its function is as follows. Catalyzes the attachment of proline to tRNA(Pro) in a two-step reaction: proline is first activated by ATP to form Pro-AMP and then transferred to the acceptor end of tRNA(Pro). As ProRS can inadvertently accommodate and process non-cognate amino acids such as alanine and cysteine, to avoid such errors it has two additional distinct editing activities against alanine. One activity is designated as 'pretransfer' editing and involves the tRNA(Pro)-independent hydrolysis of activated Ala-AMP. The other activity is designated 'posttransfer' editing and involves deacylation of mischarged Ala-tRNA(Pro). The misacylated Cys-tRNA(Pro) is not edited by ProRS. This chain is Proline--tRNA ligase, found in Staphylococcus aureus (strain MRSA252).